A 107-amino-acid polypeptide reads, in one-letter code: Integration host factor subunit beta (107 aa).

The segment at 56-107 (RPSRVGRNPKSGEKVLVPEKHVPHFKPGKELRERVDRNAGEPLKADAADDDL) is disordered. A compositionally biased stretch (basic and acidic residues) spans 65-107 (KSGEKVLVPEKHVPHFKPGKELRERVDRNAGEPLKADAADDDL).

It belongs to the bacterial histone-like protein family. Heterodimer of an alpha and a beta chain.

This protein is one of the two subunits of integration host factor, a specific DNA-binding protein that functions in genetic recombination as well as in transcriptional and translational control. The sequence is that of Integration host factor subunit beta from Paraburkholderia phymatum (strain DSM 17167 / CIP 108236 / LMG 21445 / STM815) (Burkholderia phymatum).